Reading from the N-terminus, the 711-residue chain is Triacylglycerol hydrolase DDHD2 (711 aa).

The interval 1-24 (MSSVQSQQEQLSQSDPSPSPNSCS) is disordered. One can recognise a WWE domain in the interval 30–112 (DMDAGSLYEP…WDELASEVRR (83 aa)). The Nucleophile role is filled by S351. One can recognise an SAM domain in the interval 385-448 (GDTPTLEEDL…NYFSTRKNSM (64 aa)). S447 is subject to Phosphoserine. Disordered stretches follow at residues 449–470 (GIKR…SEFC) and 609–638 (LQAS…EETS). The region spanning 495-700 (LIYKPEIFFA…VLLVLKEIYQ (206 aa)) is the DDHD domain. Residues 614–624 (TPEETEAEPES) are compositionally biased toward acidic residues.

It belongs to the PA-PLA1 family. As to quaternary structure, forms homooligomers and, to a much smaller extent, heterooligomers with DDHD1. As to expression, widely expressed (at protein level).

It localises to the cytoplasm. Its subcellular location is the cytosol. It is found in the endoplasmic reticulum-Golgi intermediate compartment. The protein resides in the golgi apparatus. The protein localises to the cis-Golgi network. The catalysed reaction is a triacylglycerol + H2O = a diacylglycerol + a fatty acid + H(+). It carries out the reaction a diacylglycerol + H2O = a monoacylglycerol + a fatty acid + H(+). The enzyme catalyses a 1,3-diacylglycerol + H2O = a 1-acylglycerol + a fatty acid + H(+). It catalyses the reaction a 1-acylglycerol + H2O = glycerol + a fatty acid + H(+). The catalysed reaction is 1,2,3-tri-(9Z-octadecenoyl)-glycerol + H2O = di-(9Z)-octadecenoylglycerol + (9Z)-octadecenoate + H(+). It carries out the reaction di-(9Z)-octadecenoylglycerol + H2O = (9Z-octadecenoyl)-glycerol + (9Z)-octadecenoate + H(+). The enzyme catalyses 1,3-di-(9Z-octadecenoyl)-glycerol + H2O = 1-(9Z-octadecenoyl)-glycerol + (9Z)-octadecenoate + H(+). It catalyses the reaction trihexadecanoylglycerol + H2O = dihexadecanoylglycerol + hexadecanoate + H(+). The catalysed reaction is 1,2-di-(9Z-octadecenoyl)-sn-glycero-3-phosphocholine + H2O = (9Z-octadecenoyl)-sn-glycero-3-phosphocholine + (9Z)-octadecenoate + H(+). It carries out the reaction 1-(9Z-octadecenoyl)-glycerol + H2O = glycerol + (9Z)-octadecenoate + H(+). The enzyme catalyses 1,2-di-(9Z-octadecenoyl)-sn-glycero-3-phosphate + H2O = 2-(9Z-octadecenoyl)-sn-glycero-3-phosphate + (9Z)-octadecenoate + H(+). It catalyses the reaction 1-hexadecanoyl-2-(9Z-octadecenoyl)-sn-glycero-3-phosphate + H2O = 2-(9Z-octadecenoyl)-sn-glycero-3-phosphate + hexadecanoate + H(+). The catalysed reaction is 1-hexadecanoyl-2-(9Z-octadecenoyl)-sn-glycero-3-phosphoethanolamine + H2O = 2-(9Z-octadecenoyl)-sn-glycero-3-phosphoethanolamine + hexadecanoate + H(+). It carries out the reaction 1-hexadecanoyl-2-(9Z-octadecenoyl)-sn-glycero-3-phospho-L-serine + H2O = 2-(9Z-octadecenoyl)-sn-glycero-3-phospho-L-serine + hexadecanoate + H(+). The enzyme catalyses 1-hexadecanoyl-2-(9Z-octadecenoyl)-sn-glycero-3-phosphocholine + H2O = 2-(9Z-octadecenoyl)-sn-glycero-3-phosphocholine + hexadecanoate + H(+). Diacylglycerol (DAG) and triacylglycerol (TAG) lipase required for proper lipid homeostasis in the central nervous system. It cooperates with PNPLA2/ATGL in neuronal TAG catabolism and hydrolyzes sn-1,3 DAG downstream of PNPLA2/ATGL. In vitro, it also acts as a phospholipase that hydrolyzes preferentially phosphatidic acids, including 1,2-dioleoyl-sn-phosphatidic acid, phosphatidylcholine and phosphatidylethanolamine. Specifically binds to phosphatidylinositol 3-phosphate (PI(3)P), phosphatidylinositol 4-phosphate (PI(4)P), phosphatidylinositol 5-phosphate (PI(5)P) and possibly phosphatidylinositol 4,5-bisphosphate (PI(4,5)P2). May be involved in the maintenance of the endoplasmic reticulum and/or Golgi structures. May regulate the transport between Golgi apparatus and plasma membrane. The sequence is that of Triacylglycerol hydrolase DDHD2 from Homo sapiens (Human).